A 320-amino-acid chain; its full sequence is D-alanine--D-alanine ligase (320 aa).

Residues 104 to 308 enclose the ATP-grasp domain; sequence KRVCLSHGVP…YEDLCVEILR (205 aa). 134-189 contributes to the ATP binding site; the sequence is AAEFGMPLMLKAPHEGSTIGIAKVETAEGMQAGFDLCAKYDDVVLVEQFVKGRELT. Mg(2+)-binding residues include Asp-261, Glu-275, and Asn-277.

It belongs to the D-alanine--D-alanine ligase family. Mg(2+) is required as a cofactor. Requires Mn(2+) as cofactor.

Its subcellular location is the cytoplasm. It catalyses the reaction 2 D-alanine + ATP = D-alanyl-D-alanine + ADP + phosphate + H(+). Its pathway is cell wall biogenesis; peptidoglycan biosynthesis. Its function is as follows. Cell wall formation. This chain is D-alanine--D-alanine ligase, found in Janthinobacterium sp. (strain Marseille) (Minibacterium massiliensis).